Reading from the N-terminus, the 612-residue chain is Isocitrate dehydrogenase kinase/phosphatase (612 aa).

Residues 327 to 333 and lysine 348 contribute to the ATP site; that span reads APGIKGL. Aspartate 383 is a catalytic residue. The segment at 593-612 is disordered; sequence AGAASNEQDAPDAGRSVRAA.

The protein belongs to the AceK family.

Its subcellular location is the cytoplasm. It carries out the reaction L-seryl-[isocitrate dehydrogenase] + ATP = O-phospho-L-seryl-[isocitrate dehydrogenase] + ADP + H(+). Its function is as follows. Bifunctional enzyme which can phosphorylate or dephosphorylate isocitrate dehydrogenase (IDH) on a specific serine residue. This is a regulatory mechanism which enables bacteria to bypass the Krebs cycle via the glyoxylate shunt in response to the source of carbon. When bacteria are grown on glucose, IDH is fully active and unphosphorylated, but when grown on acetate or ethanol, the activity of IDH declines drastically concomitant with its phosphorylation. In Paraburkholderia xenovorans (strain LB400), this protein is Isocitrate dehydrogenase kinase/phosphatase.